Here is a 302-residue protein sequence, read N- to C-terminus: Sulfate adenylyltransferase subunit 2 (302 aa).

It belongs to the PAPS reductase family. CysD subfamily. As to quaternary structure, heterodimer composed of CysD, the smaller subunit, and CysN.

The enzyme catalyses sulfate + ATP + H(+) = adenosine 5'-phosphosulfate + diphosphate. The protein operates within sulfur metabolism; hydrogen sulfide biosynthesis; sulfite from sulfate: step 1/3. Functionally, with CysN forms the ATP sulfurylase (ATPS) that catalyzes the adenylation of sulfate producing adenosine 5'-phosphosulfate (APS) and diphosphate, the first enzymatic step in sulfur assimilation pathway. APS synthesis involves the formation of a high-energy phosphoric-sulfuric acid anhydride bond driven by GTP hydrolysis by CysN coupled to ATP hydrolysis by CysD. The chain is Sulfate adenylyltransferase subunit 2 from Psychromonas ingrahamii (strain DSM 17664 / CCUG 51855 / 37).